A 274-amino-acid chain; its full sequence is Putative pyruvate, phosphate dikinase regulatory protein (274 aa).

149-156 provides a ligand contact to ADP; that stretch reads GVSRSSKT.

It belongs to the pyruvate, phosphate/water dikinase regulatory protein family. PDRP subfamily.

The catalysed reaction is N(tele)-phospho-L-histidyl/L-threonyl-[pyruvate, phosphate dikinase] + ADP = N(tele)-phospho-L-histidyl/O-phospho-L-threonyl-[pyruvate, phosphate dikinase] + AMP + H(+). It catalyses the reaction N(tele)-phospho-L-histidyl/O-phospho-L-threonyl-[pyruvate, phosphate dikinase] + phosphate + H(+) = N(tele)-phospho-L-histidyl/L-threonyl-[pyruvate, phosphate dikinase] + diphosphate. Its function is as follows. Bifunctional serine/threonine kinase and phosphorylase involved in the regulation of the pyruvate, phosphate dikinase (PPDK) by catalyzing its phosphorylation/dephosphorylation. This is Putative pyruvate, phosphate dikinase regulatory protein from Rhizorhabdus wittichii (strain DSM 6014 / CCUG 31198 / JCM 15750 / NBRC 105917 / EY 4224 / RW1) (Sphingomonas wittichii).